The primary structure comprises 374 residues: MDDLCEANGTFAISLFKILGEEDNSRNVFFSPMSISSALAMVFMGAKGSTAAQMSQALCLYKDGDIHRGFQSLLSEVNRTGTQYLLRTANRLFGEKTCDFLPDFKEYCQKFYQAELEELSFAEDTEECRKHINDWVAEKTEGKISEVLDAGTVDPLTKLVLVNAIYFKGKWNEQFDRKYTRGMLFKTNEEKKTVQMMFKEAKFKMGYADEVHTQVLELPYVEEELSMVILLPDDNTDLAVVEKALTYEKFKAWTNSEKLTKSKVQVFLPRLKLEESYDLEPFLRRLGMIDAFDEAKADFSGMSTEKNVPLSKVAHKCFVEVNEEGTEAAAATAVVRNSRCSRMEPRFCADHPFLFFIRHHKTNCILFCGRFSSP.

The protein belongs to the serpin family. Ov-serpin subfamily.

The protein localises to the cytoplasm. Its function is as follows. Has an important role in epithelial desmosome-mediated cell-cell adhesion. This Homo sapiens (Human) protein is Serpin B8 (SERPINB8).